A 1129-amino-acid polypeptide reads, in one-letter code: Serine/threonine-protein kinase 11-interacting protein (1129 aa).

LRR repeat units lie at residues 107-128 (SLRS…RSVY), 130-150 (QLEV…IALC), 162-183 (VLHT…LELL), 185-206 (SLKI…LKVL), 208-229 (ELQY…SVGN), 232-253 (KLHS…ENLP), 254-275 (NLQH…SGLA), and 279-300 (NLKQ…RALT). 4 disordered regions span residues 335–392 (RLQP…RRGQ), 428–475 (DPEY…HVAP), 654–678 (GDIY…NHTG), and 696–724 (NPTG…GLAA). The span at 337-355 (QPSSSATESSCTGDLTDSY) shows a compositional bias: polar residues. Residues 365-374 (LPRKKSRVKV) are compositionally biased toward basic residues. Positions 381–391 (ERSDSEYERRG) are enriched in basic and acidic residues. Residues 436-447 (HSPPPRASPSPT) show a composition bias toward pro residues. Over residues 448-458 (APSSVPKQKSP) the composition is skewed to low complexity.

This sequence belongs to the STK11IP family.

It localises to the cytoplasm. This Xenopus tropicalis (Western clawed frog) protein is Serine/threonine-protein kinase 11-interacting protein (stk11ip).